The primary structure comprises 483 residues: Aspartyl/glutamyl-tRNA(Asn/Gln) amidotransferase subunit B (483 aa).

The protein belongs to the GatB/GatE family. GatB subfamily. As to quaternary structure, heterotrimer of A, B and C subunits.

The catalysed reaction is L-glutamyl-tRNA(Gln) + L-glutamine + ATP + H2O = L-glutaminyl-tRNA(Gln) + L-glutamate + ADP + phosphate + H(+). The enzyme catalyses L-aspartyl-tRNA(Asn) + L-glutamine + ATP + H2O = L-asparaginyl-tRNA(Asn) + L-glutamate + ADP + phosphate + 2 H(+). Its function is as follows. Allows the formation of correctly charged Asn-tRNA(Asn) or Gln-tRNA(Gln) through the transamidation of misacylated Asp-tRNA(Asn) or Glu-tRNA(Gln) in organisms which lack either or both of asparaginyl-tRNA or glutaminyl-tRNA synthetases. The reaction takes place in the presence of glutamine and ATP through an activated phospho-Asp-tRNA(Asn) or phospho-Glu-tRNA(Gln). The protein is Aspartyl/glutamyl-tRNA(Asn/Gln) amidotransferase subunit B of Lachnospira eligens (strain ATCC 27750 / DSM 3376 / VPI C15-48 / C15-B4) (Eubacterium eligens).